The primary structure comprises 184 residues: Guanylate kinase (184 aa).

In terms of domain architecture, Guanylate kinase-like spans lysine 5–glutamine 183. ATP is bound at residue glycine 12 to glycine 19.

Belongs to the guanylate kinase family.

The protein resides in the cytoplasm. The catalysed reaction is GMP + ATP = GDP + ADP. In terms of biological role, essential for recycling GMP and indirectly, cGMP. The sequence is that of Guanylate kinase from Prochlorococcus marinus (strain MIT 9312).